Here is a 354-residue protein sequence, read N- to C-terminus: Isocitrate dehydrogenase [NAD] regulatory subunit A, mitochondrial (354 aa).

Substrate is bound by residues serine 95, asparagine 97, arginine 101, arginine 111, and arginine 132. 3 residues coordinate Mg(2+): aspartate 219, aspartate 243, and aspartate 247. NADP(+)-binding positions include 276 to 282 and asparagine 289; that span reads HGTAPDI.

The protein belongs to the isocitrate and isopropylmalate dehydrogenases family. As to quaternary structure, heterooligomer of catalytic and regulatory subunits. Requires Mg(2+) as cofactor. Mn(2+) is required as a cofactor.

It is found in the mitochondrion. It carries out the reaction D-threo-isocitrate + NAD(+) = 2-oxoglutarate + CO2 + NADH. Its function is as follows. Performs an essential role in the oxidative function of the citric acid cycle. The polypeptide is Isocitrate dehydrogenase [NAD] regulatory subunit A, mitochondrial (idhA) (Dictyostelium discoideum (Social amoeba)).